A 784-amino-acid polypeptide reads, in one-letter code: Transcriptional activator somA (784 aa).

In terms of domain architecture, LisH spans 43 to 75; the sequence is MINNLNTYIYDYFLKRGYHECARALVKDESIKL. Polar residues predominate over residues 75 to 84; that stretch reads LNTEPPTKTS. 4 disordered regions span residues 75–122, 212–295, 424–726, and 764–784; these read LNTE…PNLA, GLSQ…SQAL, MMAR…DLSI, and GFDPNISYPTDGVETGAGDGL. The segment covering 103–117 has biased composition (basic and acidic residues); the sequence is DSKDGDKIKIPDDLP. Residues 215–233 are compositionally biased toward low complexity; the sequence is QQQIAQLQKNQQMHMMQQM. Residues 234-244 show a composition bias toward basic and acidic residues; that stretch reads QREHSDMDMNG. Residues 247–259 show a composition bias toward low complexity; the sequence is PQSPSSAENAPSP. Over residues 453-467 the composition is skewed to polar residues; sequence SPQGSRAGTSPNPNE. Residues 564 to 592 show a composition bias toward low complexity; it reads QQQQGQPMGPQQSPAQQPQSTGTPQTQNS. The span at 607 to 624 shows a compositional bias: polar residues; it reads RTSPQSQNAAPPTPQQAN. A compositionally biased stretch (basic and acidic residues) spans 629 to 638; it reads KKREPKDTAR. 2 stretches are compositionally biased toward low complexity: residues 644 to 661 and 691 to 701; these read KQPAAAAAAANTAATPSS and PTTSAPQQPTS. A compositionally biased stretch (pro residues) spans 702–715; sequence APAPQPIVQQPPPD.

The protein belongs to the FLO8 family. As to quaternary structure, interacts with ptaB.

It localises to the nucleus. Its function is as follows. Transcription factor that controls the expression of genes related to the process of conidiation and adherence and regulates biofilm formation. Controls conidiation and adhesion primarily by affecting the expression of the three regulatory genes flbB, stuA and medA. Required for virulence in an egg and a mouse infection model. This Aspergillus fumigatus (strain ATCC MYA-4609 / CBS 101355 / FGSC A1100 / Af293) (Neosartorya fumigata) protein is Transcriptional activator somA.